Consider the following 383-residue polypeptide: tRNA pseudouridine synthase B (383 aa).

Residue Asp53 is the Nucleophile of the active site.

Belongs to the pseudouridine synthase TruB family. Type 1 subfamily.

It carries out the reaction uridine(55) in tRNA = pseudouridine(55) in tRNA. Functionally, responsible for synthesis of pseudouridine from uracil-55 in the psi GC loop of transfer RNAs. The chain is tRNA pseudouridine synthase B from Tropheryma whipplei (strain TW08/27) (Whipple's bacillus).